The sequence spans 560 residues: DNA ligase B (560 aa).

Residue lysine 124 is the N6-AMP-lysine intermediate of the active site.

This sequence belongs to the NAD-dependent DNA ligase family. LigB subfamily.

It carries out the reaction NAD(+) + (deoxyribonucleotide)n-3'-hydroxyl + 5'-phospho-(deoxyribonucleotide)m = (deoxyribonucleotide)n+m + AMP + beta-nicotinamide D-nucleotide.. Functionally, catalyzes the formation of phosphodiester linkages between 5'-phosphoryl and 3'-hydroxyl groups in double-stranded DNA using NAD as a coenzyme and as the energy source for the reaction. This Escherichia coli O9:H4 (strain HS) protein is DNA ligase B.